A 764-amino-acid polypeptide reads, in one-letter code: MKLSVNDLNVFVNTPKDIAKLCEDLSRLGLEVESCIPCIAPKNVVVGKVLEKAPHKNAEKLSVCQVDVGKEVLPVVCGAKNVAPNQFAPVALKGAIIGSTTIAKTELRGVESHGMICSSIELGFPKINDGILELDESVGELVLGKELHEYAPFNTHVLEISLTPNRGDCLSVLGIAREISAFYHTPLKPIKALNFTPTSDLITLSADENIESHLAYYLICNHSLKTPLNIKLSLAHNNALSENDLNNFIEFSAHFSGVILNAYSLNKTPIDLIIKNDENNLESVYINHQKRSTIVIKHQDQKDLSECLLLEASYTDPVSLSLKLHALKDKTLQKDNALVYRSTRGSNPNLSDGLNFLSAHLKAAILESKQTEHSLKDCALTFQLEDITEILGLVIEAEKIQNILKNLGFKVSTKEPNSKPQILEVIVPNFRHDIKTIQDIAEEILRFVGIDNLVSKPLHCVSSKNSNPHYDTHRFFENLKHKALACGFKEVIHYVFYSKEKQQKLGFEVLEDPLELQNPITTELNTLRTSLVCGLLDASLRNKNLGFKSIALYEKGSVYNSKREEIQKLGFLVSGLQKKESYPHAKGKAWDFYSFAECVSRIIGDFSLEKLTTQTPINHPYQSAKIIQNNEIIGVIAKIHPKVIQELDLFESYYAEIDASKLKRPAMLLKPFSIYPSSVRDLTLIIDENTAFSKIKKALKDAQIPNLSEILPLDIFKESGNTIALSVRCVIHSLEKTLNDEEVNSAVQKALEILEKEFNARLKG.

A tRNA-binding domain is found at 38 to 148 (CIAPKNVVVG…GELVLGKELH (111 aa)). Residues 375–455 (LKDCALTFQL…RFVGIDNLVS (81 aa)) form the B5 domain. Mg(2+) contacts are provided by aspartate 433, aspartate 439, glutamate 442, and glutamate 443. The FDX-ACB domain occupies 673–763 (SIYPSSVRDL…LEKEFNARLK (91 aa)).

The protein belongs to the phenylalanyl-tRNA synthetase beta subunit family. Type 1 subfamily. Tetramer of two alpha and two beta subunits. Mg(2+) serves as cofactor.

The protein localises to the cytoplasm. The enzyme catalyses tRNA(Phe) + L-phenylalanine + ATP = L-phenylalanyl-tRNA(Phe) + AMP + diphosphate + H(+). The sequence is that of Phenylalanine--tRNA ligase beta subunit (pheT) from Helicobacter pylori (strain J99 / ATCC 700824) (Campylobacter pylori J99).